The following is a 464-amino-acid chain: Protein FAM90A22 (464 aa).

3 disordered regions span residues 1–43, 70–389, and 415–437; these read MMAR…PRLK, PATL…HDGA, and HSPEKPGAFLAQSPHVSEKSEAP. Composition is skewed to basic and acidic residues over residues 74-89 and 97-114; these read GKKEGKENLKPWKPRA and NKDKGEKEERPRQQDPQR. Residues 182 to 197 show a composition bias toward low complexity; sequence SLSPLRKTSLSSSSSL.

This sequence belongs to the FAM90 family.

This is Protein FAM90A22 from Homo sapiens (Human).